The sequence spans 20 residues: Snaclec ophioluxin subunit alpha (20 aa).

A disulfide bridge connects residues cysteine 4 and cysteine 15. The C-type lectin domain occupies 11-20; that stretch reads YDQHCYRIIN.

Belongs to the snaclec family. Heterodimer of subunits alpha and beta; disulfide-linked. As to expression, expressed by the venom gland.

Its subcellular location is the secreted. Its function is as follows. Binds to the platelet and collagen receptor glycoprotein VI (GP6) and activates platelet aggregation. The chain is Snaclec ophioluxin subunit alpha from Ophiophagus hannah (King cobra).